Reading from the N-terminus, the 1234-residue chain is Transcription-repair-coupling factor (1234 aa).

A Helicase ATP-binding domain is found at 663–824 (DMEKPIPMDR…LAGIREMSTI (162 aa)). 676–683 (GDVGYGKT) is a binding site for ATP. The short motif at 777–780 (DEEQ) is the DEEQ box element. A Helicase C-terminal domain is found at 842-999 (DDKQIAAALR…GMAVALKDLE (158 aa)). The tract at residues 1207 to 1234 (RQHIGITNPSPPGEDGRGRNTTIKERQP) is disordered. Residues 1220-1234 (EDGRGRNTTIKERQP) show a composition bias toward basic and acidic residues.

This sequence in the N-terminal section; belongs to the UvrB family. In the C-terminal section; belongs to the helicase family. RecG subfamily.

Its subcellular location is the cytoplasm. Its function is as follows. Couples transcription and DNA repair by recognizing RNA polymerase (RNAP) stalled at DNA lesions. Mediates ATP-dependent release of RNAP and its truncated transcript from the DNA, and recruitment of nucleotide excision repair machinery to the damaged site. The sequence is that of Transcription-repair-coupling factor from Mycobacterium bovis (strain ATCC BAA-935 / AF2122/97).